Reading from the N-terminus, the 495-residue chain is Glucokinase (495 aa).

A Hexokinase domain is found at 3-483 (SALLDEAARI…SGVGAALIAL (481 aa)). Residues 57 to 206 (NGTEKGLYLA…GLPVRVAALV (150 aa)) are hexokinase small subdomain. Lys93 provides a ligand contact to ATP. Positions 149 to 175 (DLGFTFSFPVRQLGINKGTLIRWTKGF) are glucose-binding. The segment at 207 to 472 (NDTVGTLMAR…KKIRIGISKD (266 aa)) is hexokinase large subdomain. 472–477 (DGSGVG) is a binding site for ATP.

Belongs to the hexokinase family. In terms of assembly, monomer.

It catalyses the reaction D-glucose + ATP = D-glucose 6-phosphate + ADP + H(+). It carries out the reaction a D-hexose + ATP = a D-hexose 6-phosphate + ADP + H(+). The enzyme catalyses D-mannose + ATP = D-mannose 6-phosphate + ADP + H(+). The catalysed reaction is D-glucosamine + ATP = D-glucosamine 6-phosphate + ADP + H(+). The protein operates within carbohydrate metabolism; hexose metabolism. Its pathway is carbohydrate degradation; glycolysis; D-glyceraldehyde 3-phosphate and glycerone phosphate from D-glucose: step 1/4. The enzyme has great affinity for glucose. Mannose, 2-deoxyglucose and glucosamine can serve as substrates. This is Glucokinase (glkA) from Aspergillus niger.